Reading from the N-terminus, the 38-residue chain is Very early lactation protein (38 aa).

In terms of assembly, homodimer. O-glycosylated. Contains sialic acid residues. Found in the whey fraction of milk (at protein level).

The protein localises to the secreted. The sequence is that of Very early lactation protein from Trichosurus vulpecula (Brush-tailed possum).